Reading from the N-terminus, the 478-residue chain is Cysteine--tRNA ligase (478 aa).

Residue cysteine 29 participates in Zn(2+) binding. Positions 31–41 (PTVYDIPHIGN) match the 'HIGH' region motif. Positions 216, 241, and 245 each coordinate Zn(2+). A 'KMSKS' region motif is present at residues 274–278 (KMSKS). Lysine 277 contacts ATP.

This sequence belongs to the class-I aminoacyl-tRNA synthetase family. In terms of assembly, monomer. Zn(2+) is required as a cofactor.

It localises to the cytoplasm. It catalyses the reaction tRNA(Cys) + L-cysteine + ATP = L-cysteinyl-tRNA(Cys) + AMP + diphosphate. The polypeptide is Cysteine--tRNA ligase (Orientia tsutsugamushi (strain Ikeda) (Rickettsia tsutsugamushi)).